Here is a 42-residue protein sequence, read N- to C-terminus: Photosystem I reaction center subunit IX (42 aa).

Residues 7-27 (YLSTAPVLATLWFGFLAGLLI) form a helical membrane-spanning segment.

It belongs to the PsaJ family.

It localises to the plastid. Its subcellular location is the chloroplast thylakoid membrane. Functionally, may help in the organization of the PsaE and PsaF subunits. This chain is Photosystem I reaction center subunit IX, found in Marchantia polymorpha (Common liverwort).